Reading from the N-terminus, the 384-residue chain is Galactokinase (384 aa).

A substrate-binding site is contributed by 34 to 37; that stretch reads EHTD. 123–129 contributes to the ATP binding site; the sequence is SSGLSSS. Ser129 and Glu161 together coordinate Mg(2+). The active-site Proton acceptor is the Asp173. Substrate is bound at residue Tyr222.

The protein belongs to the GHMP kinase family. GalK subfamily.

It is found in the cytoplasm. The enzyme catalyses alpha-D-galactose + ATP = alpha-D-galactose 1-phosphate + ADP + H(+). It functions in the pathway carbohydrate metabolism; galactose metabolism. In terms of biological role, catalyzes the transfer of the gamma-phosphate of ATP to D-galactose to form alpha-D-galactose-1-phosphate (Gal-1-P). In Haemophilus influenzae (strain PittEE), this protein is Galactokinase.